The sequence spans 638 residues: Phosphomethylpyrimidine synthase (638 aa).

Residues Asn-233, Met-262, Tyr-291, His-327, 347 to 349 (SRG), 388 to 391 (DGLR), and Glu-427 each bind substrate. A Zn(2+)-binding site is contributed by His-431. Residue Tyr-454 coordinates substrate. Zn(2+) is bound at residue His-495. 3 residues coordinate [4Fe-4S] cluster: Cys-575, Cys-578, and Cys-583.

The protein belongs to the ThiC family. Homodimer. [4Fe-4S] cluster serves as cofactor.

The enzyme catalyses 5-amino-1-(5-phospho-beta-D-ribosyl)imidazole + S-adenosyl-L-methionine = 4-amino-2-methyl-5-(phosphooxymethyl)pyrimidine + CO + 5'-deoxyadenosine + formate + L-methionine + 3 H(+). It participates in cofactor biosynthesis; thiamine diphosphate biosynthesis. Catalyzes the synthesis of the hydroxymethylpyrimidine phosphate (HMP-P) moiety of thiamine from aminoimidazole ribotide (AIR) in a radical S-adenosyl-L-methionine (SAM)-dependent reaction. The polypeptide is Phosphomethylpyrimidine synthase (Saccharophagus degradans (strain 2-40 / ATCC 43961 / DSM 17024)).